A 299-amino-acid chain; its full sequence is Ankyrin repeat domain-containing protein 54 (299 aa).

The segment at 1–27 (MAATGGGAEDESRSGRSSSEGECAVAP) is disordered. Residue Ala-2 is modified to N-acetylalanine. The residue at position 62 (Ser-62) is a Phosphoserine. The Nuclear localization signal (NLS) motif lies at 98–116 (RRLGPTGKEVHALKRLRDS). 4 ANK repeats span residues 108-137 (HALK…DPCA), 141-170 (KGRT…DPNQ), 174-203 (LGNT…RVDA), and 207-239 (AGRT…EVKQ). The segment at 140–240 (DKGRTALHFA…EAVRLEVKQI (101 aa)) is LYN-binding. The Nuclear export signal (NES) signature appears at 282-292 (LLASFTSLSLQ).

Interacts (via ankyrin repeat region) with LYN (via SH3-domain) in an activation-independent status of LYN. Forms a multiprotein complex with LYN and HCLS1. Interacts with TSN2, VAV1, DBNL and LASP1.

It localises to the nucleus. Its subcellular location is the cytoplasm. It is found in the midbody. Plays an important role in regulating intracellular signaling events associated with erythroid terminal differentiation. This is Ankyrin repeat domain-containing protein 54 (Ankrd54) from Rattus norvegicus (Rat).